A 179-amino-acid chain; its full sequence is Inner membrane-spanning protein YciB (179 aa).

The next 5 helical transmembrane spans lie at I22–I42, M50–N70, W76–M96, I121–M141, and F149–I169.

Belongs to the YciB family.

Its subcellular location is the cell inner membrane. In terms of biological role, plays a role in cell envelope biogenesis, maintenance of cell envelope integrity and membrane homeostasis. The sequence is that of Inner membrane-spanning protein YciB from Enterobacter sp. (strain 638).